The following is a 260-amino-acid chain: Putative ABC transporter ATP-binding protein PF0068 (260 aa).

Positions 2–234 (IEVKGVWFWY…DLKRYKLEEP (233 aa)) constitute an ABC transporter domain. Position 34 to 41 (34 to 41 (GPNGSGKT)) interacts with ATP.

This sequence belongs to the ABC transporter superfamily.

The protein resides in the cell membrane. Probably part of an ABC transporter complex. Responsible for energy coupling to the transport system. In Pyrococcus furiosus (strain ATCC 43587 / DSM 3638 / JCM 8422 / Vc1), this protein is Putative ABC transporter ATP-binding protein PF0068.